Consider the following 264-residue polypeptide: LIMR family protein SELMODRAFT_416716 (264 aa).

Transmembrane regions (helical) follow at residues V23–Y43, I96–A116, I194–L214, and W225–I245.

The protein belongs to the LIMR family.

Its subcellular location is the membrane. The chain is LIMR family protein SELMODRAFT_416716 from Selaginella moellendorffii (Spikemoss).